We begin with the raw amino-acid sequence, 157 residues long: Protein-export protein SecB (157 aa).

The protein belongs to the SecB family. In terms of assembly, homotetramer, a dimer of dimers. One homotetramer interacts with 1 SecA dimer.

It localises to the cytoplasm. Functionally, one of the proteins required for the normal export of preproteins out of the cell cytoplasm. It is a molecular chaperone that binds to a subset of precursor proteins, maintaining them in a translocation-competent state. It also specifically binds to its receptor SecA. The chain is Protein-export protein SecB from Shewanella frigidimarina (strain NCIMB 400).